The sequence spans 461 residues: Phosphoglucosamine mutase (461 aa).

S113 functions as the Phosphoserine intermediate in the catalytic mechanism. The Mg(2+) site is built by S113, D251, D253, and D255. A Phosphoserine modification is found at S113.

This sequence belongs to the phosphohexose mutase family. It depends on Mg(2+) as a cofactor. Activated by phosphorylation.

The catalysed reaction is alpha-D-glucosamine 1-phosphate = D-glucosamine 6-phosphate. Functionally, catalyzes the conversion of glucosamine-6-phosphate to glucosamine-1-phosphate. This Prochlorococcus marinus (strain SARG / CCMP1375 / SS120) protein is Phosphoglucosamine mutase.